A 199-amino-acid polypeptide reads, in one-letter code: Ribonuclease HII (199 aa).

Residues Gly13 to Gly199 enclose the RNase H type-2 domain. Positions 19, 20, and 110 each coordinate a divalent metal cation.

The protein belongs to the RNase HII family. The cofactor is Mn(2+). Mg(2+) serves as cofactor.

It is found in the cytoplasm. It catalyses the reaction Endonucleolytic cleavage to 5'-phosphomonoester.. Its function is as follows. Endonuclease that specifically degrades the RNA of RNA-DNA hybrids. The sequence is that of Ribonuclease HII from Jannaschia sp. (strain CCS1).